The primary structure comprises 508 residues: Fasciclin-3 (508 aa).

A signal peptide spans 1–20 (MSRIVFICLAAILTDALTWA). Gln-21 bears the Pyrrolidone carboxylic acid mark. The Extracellular portion of the chain corresponds to 21-346 (QVNVEPNTAL…SSKPPSSSLD (326 aa)). The Ig-like V-type domain maps to 44 to 106 (GRSINYCRIE…NGQVKCSLGV (63 aa)). Ig-like C2-type domains are found at residues 126-223 (PIIE…ESVP) and 236-310 (APVH…GLTL). A disulfide bridge links Cys-150 with Cys-211. N-linked (GlcNAc...) asparagine glycans are attached at residues Asn-160, Asn-257, and Asn-300. The helical transmembrane segment at 347 to 370 (VAAIVGIVVAVAVLVLVVLLIVFA) threads the bilayer. The Cytoplasmic segment spans residues 371–508 (RATGRWCFGG…QSTSPVWTFK (138 aa)). The tract at residues 381–439 (KSIKTPTNETSDTESADIKATSTATATTTMGGVGVSAEEEETVNEQESPQEQQQQQQKK) is disordered. Ser-382 is subject to Phosphoserine. Composition is skewed to low complexity over residues 400 to 409 (ATSTATATTT) and 425 to 437 (EQES…QQQQ). The residue at position 459 (Ser-459) is a Phosphoserine.

As to expression, expressed on different subsets of axon bundles (fascicles) in insect embryos.

The protein localises to the membrane. Its function is as follows. Mediates cell adhesion in a Ca(2+)-independent manner. It plays a role in axon outgrowth, guidance and fasciculation of the developing nervous system. Function in neurons is essential for adult survival, and is important for climbing behavior and activity. The sequence is that of Fasciclin-3 (Fas3) from Drosophila melanogaster (Fruit fly).